The sequence spans 234 residues: Leucyl/phenylalanyl-tRNA--protein transferase (234 aa).

Belongs to the L/F-transferase family.

The protein localises to the cytoplasm. The enzyme catalyses N-terminal L-lysyl-[protein] + L-leucyl-tRNA(Leu) = N-terminal L-leucyl-L-lysyl-[protein] + tRNA(Leu) + H(+). It carries out the reaction N-terminal L-arginyl-[protein] + L-leucyl-tRNA(Leu) = N-terminal L-leucyl-L-arginyl-[protein] + tRNA(Leu) + H(+). It catalyses the reaction L-phenylalanyl-tRNA(Phe) + an N-terminal L-alpha-aminoacyl-[protein] = an N-terminal L-phenylalanyl-L-alpha-aminoacyl-[protein] + tRNA(Phe). Its function is as follows. Functions in the N-end rule pathway of protein degradation where it conjugates Leu, Phe and, less efficiently, Met from aminoacyl-tRNAs to the N-termini of proteins containing an N-terminal arginine or lysine. The polypeptide is Leucyl/phenylalanyl-tRNA--protein transferase (Dechloromonas aromatica (strain RCB)).